Reading from the N-terminus, the 3365-residue chain is MTSIANLFDKKSKRSNEDTGEKEETKKSRSGTLKFKTLFGTSKKDKEKKILQQLQQQQDDEQQQQQQQFMEGDNNNNNTNSLNTPSVEGDSENINRLAASTNSTSYSSLRSSSTRSIDYNPSNNGGNGGIRSDSFYSQTSESSDITSTSTTSPTMSAASSSSSSGTVKTPKPPKSSKLKHIYNSLKFKSLKTEKNGSSSSIKSNISNFEFIMPNTPLPIFDQQSPPIHFYNSNQFSDFQYFGTPLYSLIKRQDNGLSIPILLEKSISFLEGHCHVEDLFFRKYNNEKVKFMRNSFERTGDFNFYYPDPQDPYDVAALLVEFIASLPDQLLNVELYNAIKNHTSALNSQYGGYWDIQYLAQKLSVESREFLQRLLFFLKKHVSACLFKQQQQQQQQRESTEVLTLSLSSSTSTLEPEPQPLPLSTSTQRLPQQSSDDNSNNDNNNKNDNDNDNDNDNNNDNNNINNDNGEIIPPSIQVTPPTSPQTQPKQQQPPQPPQKTLIEKLSELFTPLFVNYKTHSAFYSSTSTLITSCEDIFVHIDERPITLPGEFIMMQIKNVIIPPTNLKLEHTISSSSKSDKNDKNDKNGNTDVTLWQSGTLFITNYRMIWKKDESNSIDSESNSILLPEDIITPTQSFSSINNNNNNNSSKFVEIKLYSFEIILTSIIKWESFGKSLKSTTPMMSTPTTFQNGGVNRSQFQIFLCYCKNIRFQYMGFSDESNFRDLEKLNLILAYYINPLIDFGRYFSSVNNEIPRAPLLANNNNSSSNLISLGRSGITNTSTANINGSNRNSVGGNGSHDYTTNIWDIYSPLIEGQRLKLDLDKDWRVVEFLSRDTSTIYPKRILIPNLIGDELLQSYVRKTQSKIPIFSWSNQNNKSMLFRICVYNQPFNNKFNSGGTLAYNNNSTIINNNSVIITNSSTIGTNTSGISNSNHLIVGEIEPPSPIKKRQQQIVDKKDTSSPLSSLRSSKGIPSKSSKKDKQGFLSSSTSSIIPIQTTISTDTVDVKLYNLFVNKEEQLQSSTSSSPSTSLNNSSNNLNKEFQQIHQQMQQNQLNSSSNNNNNNNNNNNNNNNNNNNNNNNNNNNNNNNNNNNNNNNKINKRQNEATIVFTNKVGGTSDNHINIISVYEQFKMNSSNIIFLSIPTREQVEACWFDLYQSITSFDGSMDAWKSIEESKWVDSVKLLLEGCVKVSNLLDEGSSVLLKPPIDSPLHTLDLASISSLTMVLSDPFYRTLDGFLILIEKEWIQYGFPFNNINYHKEQNNLNNNNGNKENSSSSSSSSSSTSTTPSITKKSSGSISKGSSGIASLINDLDKYDSNFVLPDTIHTESQKKKTYLFQDQYESSILVNRSFSPIFVQFLDAVWQLQRQFPFHFEFNESLLLLLVKESFSGRFGNFLYSEALRDSERKFLKRSPSIWTFINQNKSTFINLLYKHSANSSSSSSSTNKLPSPISPRQSFIFKQEDFNEMIKPSCDNDQIILWSSFFTEFINSRESQQISKKLIGKVKCDLISQKLTFLSIDRNLLSYFSTLTKLNLSRNYFNTFPIEIILLSNLTHLWLQDNRIKSIPSSLLKLIGSKLKLQEFDLSHNLLESLHKSIYTLSTLTKLVLDNNKLIIIPESISKMKQLKCLSVQNNRLSSFPQALSLCVGLEELYVQNNQIRELPLGFFKLGSLRMLDLRNNQITKFKCHKLDDKSCFLMNEIIHFRMGPNPLQKLSNQMFEMRSLIHLELTGCSLSTVPLKLLDNLVNLEALYLNQNKLSEISIDFKRLFKLSVLDLSDNQFTNVPIHAMLPSLKKLYLHNNQLYNISFNDFNLPLLSELRLDGNKLTYVSPSIGTKLLSLTLLNLDRNPQITTLPHTLALLKKLKSLIVNSNIMESPFRELETTDAILRYLTLQMQQSQFHPRNKLIIISDITNPQIKNEFIKNLTIAKPLTSKEREKEKEKEKEKEKEKKHKNIGYGSKDKDKKGININYQQQHQQQQQYQQHQYSSQIGFNQNLPIKWEIDYENYPNSALYNLASTIHCTNSFISQPIMISSSNQECTKLNKEEFLNSRFNTQEISKKKNLTIFIRDLSQLNSSGSASASGNGSGNGNGIGISNTNCSQHLFSKRAVYCLVWALSESEEPTRIYKWLESIRDRCTFATVFIVGLYNSDYCQDVPKDYYTFITPKIEQKCHNLFPNFTFSFINILNNNNNNNNNNNNNNNNNNNNSGGNVVPVQPSINNSIDNNVENTNNNNNIINNNNNNNNNNNNNNNNNNSYNSNSNSNSNNNNNNNSNNNNNNNINNNNINNNNNNNNNNNNNNNNNNNNNNSNNNSNNNSNSNSNSNSNNSNNNNINNNNSNNNNNNNNNNNNNNNNNNNNNNNNNNNNNDNDNNNNDNNNNLNNSNLNNNNGSNINISSSNNILGGMPKLREEIKNVFLNFKPFGTKVSSSQKLFEKHIKTLQTPFISKKELFSIGEMCKLDKIETKNTCELLTELGLLFWSEDHDWVILDPIWLSNTLNLLLTLKQSSSAPSTPPQIPLNSTNLNNTSIPSQITTTSTNSSSTSTSTSTSTSTSTSTSTSTSTSTPLQTPTSLVSLSNISLSTISIPIQPNTSSILLDSSMNDSFNKESSGSNKVANPTIRKRDIILMSNLEGIWNDIPTRLYPYLLTLAKKFNIAYQIDTLYDPTSWGFVYPSPISNQQQQQQQQSSTQHQHQHHHHQQQQQTSINLNRLSISGSPSLRSISIRNGGNINTLNSSGSNNSSPLKFPNLALSPIRNGSNSNLTHHHGSNSSLNNLLSPLKNLQLQQKYDKLKLLNEKVIFLPNELPNEPPMSMDKMFLDVGEPRSLCRIFQFEKKIPSSFFPRLLSQLYMFCSIKHCWKNGVILENCYLSFPVARRFPMSPNAKNPFRRSSTISVLEADDLVSIQVLGDTKIEISSSKMCRHILQIFESILESYNQLAYTIYISCIHCIETLPKSEQYLFSLNQIEESVIKGKTYQSCPIHSSIPIKLNQLAPDLTMNDLRHKLIDFKEVELDPNPIGEGGTATVYKGKWRQSDVAIKLLKTDVVGSDFSKVFAEYRREIFCLSSFIHDNILDLKGFCLEPLAIITEFQSGGNLYDYIHDLKNPLDWQLRIKIAKGIAASLQTLHDSRPSVVHRDLKSPNILLSSKDSLTMECHLCDFSLSGFSTTVANRSVQNPVWLAPEVINNELCSDKSDVYAYGVILFELLSRTRFFSNITFMSEVEGLITEGVRPSLPSHNLPEYDSLLNICWAQDPTCRPSFIEITKKLEEIELILKTHTPVEPVYTETSKNQHIQLNRGNTIYTLVKRPITPIQQQQQQKQQQLQQQKQSPKQLQQQKPLPTPPKQLSNNDSTPTKPLDDSSDSSSEDSNN.

Disordered stretches follow at residues 1 to 177, 397 to 497, 944 to 985, 1044 to 1098, and 1261 to 1301; these read MTSI…KSSK, ESTE…QPPQ, PIKK…GFLS, IHQQ…NNKI, and QNNL…ISKG. Basic and acidic residues predominate over residues 8–27; the sequence is FDKKSKRSNEDTGEKEETKK. Low complexity-rich tracts occupy residues 51–84, 100–116, 137–169, and 397–415; these read LQQL…SLNT, STNS…STRS, SQTS…TVKT, and ESTE…TLEP. One can recognise a Rho-GAP domain in the interval 243–437; it reads TPLYSLIKRQ…RLPQQSSDDN (195 aa). The span at 421–434 shows a compositional bias: polar residues; the sequence is PLSTSTQRLPQQSS. Low complexity-rich tracts occupy residues 435 to 445, 457 to 489, 959 to 974, 1044 to 1096, and 1262 to 1301; these read DDNSNNDNNNK, NNDN…QPKQ, SSPL…IPSK, IHQQ…NNNN, and NNLN…ISKG. One can recognise a Myotubularin phosphatase domain in the interval 804-1484; the sequence is IWDIYSPLIE…DQIILWSSFF (681 aa). LRR repeat units follow at residues 1510–1526, 1527–1549, 1550–1572, 1576–1599, 1600–1622, 1624–1645, 1646–1668, 1670–1691, 1697–1720, 1722–1743, 1744–1770, 1772–1789, 1790–1812, 1814–1835, 1837–1861, and 1863–1887; these read SQKL…LSYF, STLT…IILL, SNLT…LLKL, KLKL…IYTL, STLT…ISKM, QLKC…LSLC, VGLE…FFKL, SLRM…KLDD, MNEI…MFEM, SLIH…LLDN, LVNL…LFKL, VLDL…HAML, PSLK…DFNL, LLSE…IGTK, LSLT…ALLK, and LKSL…DAIL. The segment covering 1932-1947 has biased composition (basic and acidic residues); the sequence is SKEREKEKEKEKEKEK. Disordered regions lie at residues 1932 to 1963, 2190 to 2389, 2507 to 2567, and 2674 to 2704; these read SKER…DKDK, NNNN…NNGS, APST…LQTP, and SNQQ…TSIN. 4 stretches are compositionally biased toward low complexity: residues 2190–2205, 2216–2389, 2522–2567, and 2676–2688; these read NNNN…NNNN, SINN…NNGS, NNTS…LQTP, and QQQQ…STQH. The Protein kinase domain maps to 3008-3269; sequence ELDPNPIGEG…KKLEEIELIL (262 aa). Residues 3014-3022 and K3035 each bind ATP; that span reads IGEGGTATV. D3132 acts as the Proton acceptor in catalysis. Over residues 3311–3333 the composition is skewed to low complexity; sequence QQQKQQQLQQQKQSPKQLQQQKP. The tract at residues 3311–3365 is disordered; it reads QQQKQQQLQQQKQSPKQLQQQKPLPTPPKQLSNNDSTPTKPLDDSSDSSSEDSNN. A compositionally biased stretch (acidic residues) spans 3354 to 3365; that stretch reads DSSDSSSEDSNN.

Belongs to the protein kinase superfamily. TKL Ser/Thr protein kinase family. ROCO subfamily.

The catalysed reaction is L-seryl-[protein] + ATP = O-phospho-L-seryl-[protein] + ADP + H(+). It carries out the reaction L-threonyl-[protein] + ATP = O-phospho-L-threonyl-[protein] + ADP + H(+). The protein is Probable serine/threonine-protein kinase roco9 (roco9) of Dictyostelium discoideum (Social amoeba).